Reading from the N-terminus, the 390-residue chain is Alkanesulfonate monooxygenase (390 aa).

The protein belongs to the SsuD family.

It catalyses the reaction an alkanesulfonate + FMNH2 + O2 = an aldehyde + FMN + sulfite + H2O + 2 H(+). Catalyzes the desulfonation of aliphatic sulfonates. This is Alkanesulfonate monooxygenase from Cupriavidus taiwanensis (strain DSM 17343 / BCRC 17206 / CCUG 44338 / CIP 107171 / LMG 19424 / R1) (Ralstonia taiwanensis (strain LMG 19424)).